The primary structure comprises 184 residues: Putative manganese efflux pump MntP (184 aa).

Transmembrane regions (helical) follow at residues 39–59 (IFGV…LSFV), 65–85 (IDHF…ILEA), 102–122 (LALG…TFSF), 132–152 (LIIG…GKIL), and 161–181 (LVLG…THLV).

The protein belongs to the MntP (TC 9.B.29) family.

It localises to the cell inner membrane. Probably functions as a manganese efflux pump. The sequence is that of Putative manganese efflux pump MntP from Campylobacter curvus (strain 525.92).